The following is a 289-amino-acid chain: Acetyl-coenzyme A carboxylase carboxyl transferase subunit beta (289 aa).

Residues 28–289 form the CoA carboxyltransferase N-terminal domain; that stretch reads LWSKCPSCEA…ALLQKLPAAA (262 aa). Residues cysteine 32, cysteine 35, cysteine 51, and cysteine 54 each contribute to the Zn(2+) site. Residues 32–54 form a C4-type zinc finger; it reads CPSCEAVLYATDLENNLQVCPKC.

Belongs to the AccD/PCCB family. Acetyl-CoA carboxylase is a heterohexamer composed of biotin carboxyl carrier protein (AccB), biotin carboxylase (AccC) and two subunits each of ACCase subunit alpha (AccA) and ACCase subunit beta (AccD). The cofactor is Zn(2+).

The protein localises to the cytoplasm. It catalyses the reaction N(6)-carboxybiotinyl-L-lysyl-[protein] + acetyl-CoA = N(6)-biotinyl-L-lysyl-[protein] + malonyl-CoA. The protein operates within lipid metabolism; malonyl-CoA biosynthesis; malonyl-CoA from acetyl-CoA: step 1/1. Functionally, component of the acetyl coenzyme A carboxylase (ACC) complex. Biotin carboxylase (BC) catalyzes the carboxylation of biotin on its carrier protein (BCCP) and then the CO(2) group is transferred by the transcarboxylase to acetyl-CoA to form malonyl-CoA. The polypeptide is Acetyl-coenzyme A carboxylase carboxyl transferase subunit beta (Dechloromonas aromatica (strain RCB)).